The primary structure comprises 638 residues: Chaperone protein DnaK (638 aa).

Thr200 carries the phosphothreonine; by autocatalysis modification. The segment at 599-623 is disordered; the sequence is LHMAATAEQQSASTGAGAGSSAKVD. The segment covering 609-620 has biased composition (low complexity); it reads SASTGAGAGSSA.

It belongs to the heat shock protein 70 family.

In terms of biological role, acts as a chaperone. This chain is Chaperone protein DnaK, found in Xylella fastidiosa (strain M12).